The sequence spans 492 residues: 2-succinylbenzoate--CoA ligase (492 aa).

The protein belongs to the ATP-dependent AMP-binding enzyme family. MenE subfamily.

The enzyme catalyses 2-succinylbenzoate + ATP + CoA = 2-succinylbenzoyl-CoA + AMP + diphosphate. The protein operates within quinol/quinone metabolism; 1,4-dihydroxy-2-naphthoate biosynthesis; 1,4-dihydroxy-2-naphthoate from chorismate: step 5/7. It participates in quinol/quinone metabolism; menaquinone biosynthesis. In terms of biological role, converts 2-succinylbenzoate (OSB) to 2-succinylbenzoyl-CoA (OSB-CoA). This is 2-succinylbenzoate--CoA ligase from Staphylococcus aureus (strain MSSA476).